The following is a 395-amino-acid chain: ATP phosphoribosyltransferase regulatory subunit (395 aa).

The protein belongs to the class-II aminoacyl-tRNA synthetase family. HisZ subfamily. As to quaternary structure, heteromultimer composed of HisG and HisZ subunits.

It localises to the cytoplasm. Its pathway is amino-acid biosynthesis; L-histidine biosynthesis; L-histidine from 5-phospho-alpha-D-ribose 1-diphosphate: step 1/9. Its function is as follows. Required for the first step of histidine biosynthesis. May allow the feedback regulation of ATP phosphoribosyltransferase activity by histidine. This chain is ATP phosphoribosyltransferase regulatory subunit, found in Thioalkalivibrio sulfidiphilus (strain HL-EbGR7).